Reading from the N-terminus, the 251-residue chain is Vitamin B12 import ATP-binding protein BtuD (251 aa).

One can recognise an ABC transporter domain in the interval 2-236 (IRVNSLQVDS…EVLQSVFGTS (235 aa)). 30-37 (GPNGCGKS) serves as a coordination point for ATP.

This sequence belongs to the ABC transporter superfamily. Vitamin B12 importer (TC 3.A.1.13.1) family. The complex is composed of two ATP-binding proteins (BtuD), two transmembrane proteins (BtuC) and a solute-binding protein (BtuF).

The protein resides in the cell inner membrane. It catalyses the reaction an R-cob(III)alamin(out) + ATP + H2O = an R-cob(III)alamin(in) + ADP + phosphate + H(+). Its function is as follows. Part of the ABC transporter complex BtuCDF involved in vitamin B12 import. Responsible for energy coupling to the transport system. The polypeptide is Vitamin B12 import ATP-binding protein BtuD (Vibrio cholerae serotype O1 (strain ATCC 39541 / Classical Ogawa 395 / O395)).